A 91-amino-acid polypeptide reads, in one-letter code: DNA-directed RNA polymerase subunit Rpo5 (91 aa).

Belongs to the archaeal Rpo5/eukaryotic RPB5 RNA polymerase subunit family. Part of the RNA polymerase complex.

Its subcellular location is the cytoplasm. The catalysed reaction is RNA(n) + a ribonucleoside 5'-triphosphate = RNA(n+1) + diphosphate. Functionally, DNA-dependent RNA polymerase (RNAP) catalyzes the transcription of DNA into RNA using the four ribonucleoside triphosphates as substrates. This Staphylothermus marinus (strain ATCC 43588 / DSM 3639 / JCM 9404 / F1) protein is DNA-directed RNA polymerase subunit Rpo5.